A 217-amino-acid chain; its full sequence is Large ribosomal subunit protein uL1 (217 aa).

It belongs to the universal ribosomal protein uL1 family.

This Spodoptera frugiperda (Fall armyworm) protein is Large ribosomal subunit protein uL1 (RpL10A).